A 602-amino-acid polypeptide reads, in one-letter code: Wings apart-like protein homolog 1 (602 aa).

The interval 34–66 (NKQKRSPGQTVSKRLHKKQRVVSNPDLSLPSSP) is disordered. The segment covering 54 to 66 (VVSNPDLSLPSSP) has biased composition (polar residues). The region spanning 160–492 (IQMKSIHELR…LGLVEESHEF (333 aa)) is the WAPL domain.

Belongs to the WAPL family.

It is found in the nucleus. The protein localises to the chromosome. In terms of biological role, regulator of sister chromatid cohesion in mitosis which negatively regulates cohesin association with chromatin. This chain is Wings apart-like protein homolog 1 (wpl1), found in Schizosaccharomyces pombe (strain 972 / ATCC 24843) (Fission yeast).